A 209-amino-acid polypeptide reads, in one-letter code: Ribosomal RNA large subunit methyltransferase E (209 aa).

5 residues coordinate S-adenosyl-L-methionine: G63, W65, D83, D99, and D124. Catalysis depends on K164, which acts as the Proton acceptor.

Belongs to the class I-like SAM-binding methyltransferase superfamily. RNA methyltransferase RlmE family.

The protein localises to the cytoplasm. The catalysed reaction is uridine(2552) in 23S rRNA + S-adenosyl-L-methionine = 2'-O-methyluridine(2552) in 23S rRNA + S-adenosyl-L-homocysteine + H(+). Functionally, specifically methylates the uridine in position 2552 of 23S rRNA at the 2'-O position of the ribose in the fully assembled 50S ribosomal subunit. The sequence is that of Ribosomal RNA large subunit methyltransferase E from Aliivibrio fischeri (strain MJ11) (Vibrio fischeri).